The following is a 625-amino-acid chain: Clathrin interactor 1 (625 aa).

In terms of domain architecture, ENTH spans 16 to 149 (NVVMNYSEIE…QDDDRLREER (134 aa)). Arginine 29 provides a ligand contact to a 1,2-diacyl-sn-glycero-3-phospho-(1D-myo-inositol-4,5-bisphosphate). An interaction with VTI1B region spans residues 52-54 (FMY). Residue arginine 67 coordinates a 1,2-diacyl-sn-glycero-3-phospho-(1D-myo-inositol-4,5-bisphosphate). Interaction with VTI1B stretches follow at residues 94–96 (SER) and 142–153 (DDRLREERKKAK). A phosphoserine mark is found at serine 163, serine 166, serine 173, serine 205, serine 210, serine 227, serine 245, and serine 299. Positions 219–331 (FRRKDREDSP…SSGDLVDLFD (113 aa)) are disordered. Residues 222 to 239 (KDREDSPERCSDSDEEKK) are compositionally biased toward basic and acidic residues. Threonine 308 bears the Phosphothreonine mark. The segment covering 308-323 (TPQSSVKTSVPSSKSS) has biased composition (low complexity). Serine 312 carries the post-translational modification Phosphoserine. The segment at 340–352 (SADLFGGFADFGS) is interaction with AP1G1, AP1G2 and GGA2. An interaction with AP1G1 and AP1G2 region spans residues 368 to 380 (GNGDFGDWSAFNQ). Serine 624 is modified (phosphoserine).

Belongs to the epsin family. Binds clathrin heavy chain and AP-2. Interacts with VTI1B. Interacts with GGA2 (via GAE domain). Interacts with AP1G1 (via GAE domain). Interacts with AP1G2 (via GAE domain). In terms of tissue distribution, ubiquitously expressed at low to intermediate levels.

It localises to the cytoplasm. Its subcellular location is the perinuclear region. The protein resides in the membrane. The protein localises to the cytoplasmic vesicle. It is found in the clathrin-coated vesicle. Its function is as follows. Binds to membranes enriched in phosphatidylinositol 4,5-bisphosphate (PtdIns(4,5)P2). May have a role in transport via clathrin-coated vesicles from the trans-Golgi network to endosomes. Stimulates clathrin assembly. The chain is Clathrin interactor 1 (CLINT1) from Homo sapiens (Human).